A 473-amino-acid chain; its full sequence is Membrane-bound acylglycerophosphatidylinositol O-acyltransferase MBOAT7 (473 aa).

Over 1–5 (MTPEE) the chain is Cytoplasmic. Residues 6-22 (WTYLMVLLISIPVGFLF) traverse the membrane as a helical segment. Residues 23 to 33 (KKAGPGLKRWG) lie on the Lumenal side of the membrane. Residues 34-57 (AAAVGLGLTLFTCGPHSLHSLITI) form a helical membrane-spanning segment. The Cytoplasmic segment spans residues 58-73 (LGTWALIQAQPCSCHA). The helical transmembrane segment at 74–93 (LALAWTFSYLLFFRALSLLG) threads the bilayer. At 94 to 194 (LPTPTPFTNA…VPSLRPLLRR (101 aa)) the chain is on the lumenal side. A helical membrane pass occupies residues 195-212 (AWPAPLFGLLFLLSSHLF). At 213 to 231 (PLEAVREDAFYARPLPTRL) the chain is on the cytoplasmic side. Residues 232–261 (FYMIPVFFAFRMRFYVAWIAAECGCIAAGF) traverse the membrane as a helical segment. At 262-426 (GAYPVAAKAR…LSMADTLRYW (165 aa)) the chain is on the lumenal side. Residue N321 is glycosylated (N-linked (GlcNAc...) asparagine). A helical membrane pass occupies residues 427–447 (ASIYFWVHFLALACLGLGLVL). Topologically, residues 448 to 473 (GGGSPSKRKTPSQATSSQAKEKLREE) are cytoplasmic. The segment at 451 to 473 (SPSKRKTPSQATSSQAKEKLREE) is disordered.

The protein belongs to the membrane-bound acyltransferase family. As to quaternary structure, interacts with SPTSSA; the interaction facilitates MBOAT7 location to mitochondria-associated membranes (MAMs).

It is found in the endoplasmic reticulum membrane. The catalysed reaction is a 1-acyl-sn-glycero-3-phospho-(1D-myo-inositol) + an acyl-CoA = a 1,2-diacyl-sn-glycero-3-phospho-(1D-myo-inositol) + CoA. The enzyme catalyses 1-octadecanoyl-sn-glycero-3-phospho-(1D-myo-inositol) + (5Z,8Z,11Z,14Z)-eicosatetraenoyl-CoA = 1-octadecanoyl-2-(5Z,8Z,11Z,14Z-eicosatetraenoyl)-sn-glycero-3-phospho-(1D-myo-inositol) + CoA. It carries out the reaction a 1-acyl-sn-glycero-3-phospho-(1D-myo-inositol) + (5Z,8Z,11Z,14Z)-eicosatetraenoyl-CoA = a 1-acyl-2-(5Z,8Z,11Z,14Z-eicosatetraenoyl)-sn-glycero-3-phospho-(1D-myo-inositol) + CoA. It catalyses the reaction (5Z,8Z,11Z,14Z)-eicosatetraenoyl-CoA + 1-hexadecanoyl-sn-glycero-3-phosphocholine = 1-hexadecanoyl-2-(5Z,8Z,11Z,14Z-eicosatetraenoyl)-sn-glycero-3-phosphocholine + CoA. It participates in lipid metabolism; phospholipid metabolism. Functionally, acyltransferase which catalyzes the transfer of an acyl group from an acyl-CoA to a lysophosphatidylinositol (1-acylglycerophosphatidylinositol or LPI) leading to the production of a phosphatidylinositol (1,2-diacyl-sn-glycero-3-phosphoinositol or PI) and participates in the reacylation step of the phospholipid remodeling pathway also known as the Lands cycle. Prefers arachidonoyl-CoA as the acyl donor, thus contributing to the regulation of free levels arachidonic acid in cell. In liver, participates in the regulation of triglyceride metabolism through the phosphatidylinositol acyl-chain remodeling regulation. The polypeptide is Membrane-bound acylglycerophosphatidylinositol O-acyltransferase MBOAT7 (Mus musculus (Mouse)).